Here is a 3093-residue protein sequence, read N- to C-terminus: Intermembrane lipid transfer protein VPS13A (3093 aa).

The 114-residue stretch at 3-116 (FESVVVDVLN…LMEAKQQELK (114 aa)) folds into the Chorein N-terminal domain. The TPR 1 repeat unit spans residues 373–406 (LTSKKPPGELLVSLEELEKTLDVLNITIARQQAE). A Phosphoserine modification is found at serine 839. The FFAT signature appears at 842-848 (EFFDAPC). Serine 1416 carries the phosphoserine modification. The 246-residue stretch at 2209 to 2454 (VAFHSPYWMV…VFYTWADPVG (246 aa)) folds into the SHR-BD domain. One copy of the TPR 2 repeat lies at 2860–2898 (ILGLDVLGNPFGLIREFSEGVEAFFYEPYQGAIQGPEEF). The required for lipid droplet localization stretch occupies residues 2953-3027 (PAGFREGITR…SSTFQGIKRA (75 aa)).

The protein belongs to the VPS13 family. As to quaternary structure, interacts (via FFAT motif) with VAPA and VAPB. Interacts with RAB7A. Interacts with XK.

The protein localises to the mitochondrion outer membrane. It localises to the endoplasmic reticulum membrane. It is found in the endosome membrane. The protein resides in the lysosome membrane. Its subcellular location is the lipid droplet. The protein localises to the golgi apparatus. It localises to the cytoplasmic vesicle. It is found in the secretory vesicle. The protein resides in the neuronal dense core vesicle. Its function is as follows. Mediates the transfer of lipids between membranes at organelle contact sites. Required for the formation or stabilization of ER-mitochondria contact sites which enable transfer of lipids between the ER and mitochondria. Negatively regulates lipid droplet size and motility. Required for efficient lysosomal protein degradation. The chain is Intermembrane lipid transfer protein VPS13A (VPS13A) from Macaca fascicularis (Crab-eating macaque).